Reading from the N-terminus, the 175-residue chain is Ribosome maturation factor RimM (175 aa).

A PRC barrel domain is found at 100–173 (EGEYYFHEII…TIIIRPMEGL (74 aa)).

Belongs to the RimM family. Binds ribosomal protein uS19.

It localises to the cytoplasm. Its function is as follows. An accessory protein needed during the final step in the assembly of 30S ribosomal subunit, possibly for assembly of the head region. Essential for efficient processing of 16S rRNA. May be needed both before and after RbfA during the maturation of 16S rRNA. It has affinity for free ribosomal 30S subunits but not for 70S ribosomes. The sequence is that of Ribosome maturation factor RimM from Geobacillus kaustophilus (strain HTA426).